The following is an 86-amino-acid chain: Toxin Tpa6 (86 aa).

A signal peptide spans 1 to 20; the sequence is MSIFPIALALLLIGLEEGEA. The region spanning 22–85 is the LCN-type CS-alpha/beta domain; the sequence is RDGYPLSKNN…WGDPGTKPCM (64 aa). Cystine bridges form between cysteine 33-cysteine 84, cysteine 37-cysteine 58, cysteine 43-cysteine 64, and cysteine 47-cysteine 66.

It belongs to the long (4 C-C) scorpion toxin superfamily. Sodium channel inhibitor family. Beta subfamily. In terms of tissue distribution, expressed by the venom gland.

The protein localises to the secreted. Functionally, beta toxins bind voltage-independently at site-4 of sodium channels (Nav) and shift the voltage of activation toward more negative potentials thereby affecting sodium channel activation and promoting spontaneous and repetitive firing. This Tityus pachyurus (Colombian scorpion) protein is Toxin Tpa6.